A 377-amino-acid chain; its full sequence is Chaperone protein DnaJ (377 aa).

The 66-residue stretch at 5-70 (DFYEVLGVDR…EKRSAYDRMG (66 aa)) folds into the J domain. A CR-type zinc finger spans residues 136-214 (GCKKEISFTA…CHGTGVKDKS (79 aa)). Zn(2+) is bound by residues cysteine 149, cysteine 152, cysteine 166, cysteine 169, cysteine 188, cysteine 191, cysteine 202, and cysteine 205. CXXCXGXG motif repeat units lie at residues 149–156 (CETCDGKG), 166–173 (CSTCGGHG), 188–195 (CPNCGGSG), and 202–209 (CNDCHGTG). Residues 353-377 (LDGDSKHHQSPKKKSFFEKLGDLFD) are disordered. A compositionally biased stretch (basic and acidic residues) spans 367–377 (SFFEKLGDLFD).

Belongs to the DnaJ family. Homodimer. The cofactor is Zn(2+).

Its subcellular location is the cytoplasm. Functionally, participates actively in the response to hyperosmotic and heat shock by preventing the aggregation of stress-denatured proteins and by disaggregating proteins, also in an autonomous, DnaK-independent fashion. Unfolded proteins bind initially to DnaJ; upon interaction with the DnaJ-bound protein, DnaK hydrolyzes its bound ATP, resulting in the formation of a stable complex. GrpE releases ADP from DnaK; ATP binding to DnaK triggers the release of the substrate protein, thus completing the reaction cycle. Several rounds of ATP-dependent interactions between DnaJ, DnaK and GrpE are required for fully efficient folding. Also involved, together with DnaK and GrpE, in the DNA replication of plasmids through activation of initiation proteins. This is Chaperone protein DnaJ from Psychrobacter sp. (strain PRwf-1).